The following is a 355-amino-acid chain: N5-carboxyaminoimidazole ribonucleotide synthase (355 aa).

Residues Arg80, Lys120, 125–131 (GYDGRGQ), 153–156 (EQGI), Glu161, His184, and 237–238 (NE) each bind ATP. The ATP-grasp domain occupies 84–267 (KQLFDKLHLP…QFELHLRAIT (184 aa)).

Belongs to the PurK/PurT family. In terms of assembly, homodimer.

It carries out the reaction 5-amino-1-(5-phospho-beta-D-ribosyl)imidazole + hydrogencarbonate + ATP = 5-carboxyamino-1-(5-phospho-D-ribosyl)imidazole + ADP + phosphate + 2 H(+). The protein operates within purine metabolism; IMP biosynthesis via de novo pathway; 5-amino-1-(5-phospho-D-ribosyl)imidazole-4-carboxylate from 5-amino-1-(5-phospho-D-ribosyl)imidazole (N5-CAIR route): step 1/2. Functionally, catalyzes the ATP-dependent conversion of 5-aminoimidazole ribonucleotide (AIR) and HCO(3)(-) to N5-carboxyaminoimidazole ribonucleotide (N5-CAIR). This Escherichia coli (strain K12) protein is N5-carboxyaminoimidazole ribonucleotide synthase.